The following is a 156-amino-acid chain: ATP synthase subunit b (156 aa).

A helical membrane pass occupies residues 5-27 (ITLIGQMITFAIFVGFTMKFVWP).

This sequence belongs to the ATPase B chain family. In terms of assembly, F-type ATPases have 2 components, F(1) - the catalytic core - and F(0) - the membrane proton channel. F(1) has five subunits: alpha(3), beta(3), gamma(1), delta(1), epsilon(1). F(0) has three main subunits: a(1), b(2) and c(10-14). The alpha and beta chains form an alternating ring which encloses part of the gamma chain. F(1) is attached to F(0) by a central stalk formed by the gamma and epsilon chains, while a peripheral stalk is formed by the delta and b chains.

It is found in the cell inner membrane. In terms of biological role, f(1)F(0) ATP synthase produces ATP from ADP in the presence of a proton or sodium gradient. F-type ATPases consist of two structural domains, F(1) containing the extramembraneous catalytic core and F(0) containing the membrane proton channel, linked together by a central stalk and a peripheral stalk. During catalysis, ATP synthesis in the catalytic domain of F(1) is coupled via a rotary mechanism of the central stalk subunits to proton translocation. Its function is as follows. Component of the F(0) channel, it forms part of the peripheral stalk, linking F(1) to F(0). This chain is ATP synthase subunit b, found in Francisella tularensis subsp. tularensis (strain SCHU S4 / Schu 4).